The following is an 825-amino-acid chain: Beta-glucosidase (825 aa).

Positions 1–20 (MLLPLYGLASFLVLSQAALV) are cleaved as a signal peptide. 5 N-linked (GlcNAc...) asparagine glycosylation sites follow: N21, N74, N97, N230, and N271. Residue D299 is part of the active site. N328, N335, N537, N550, N556, N578, N667, N690, N718, N733, and N761 each carry an N-linked (GlcNAc...) asparagine glycan.

Belongs to the glycosyl hydrolase 3 family. In terms of assembly, homotetramer.

It carries out the reaction Hydrolysis of terminal, non-reducing beta-D-glucosyl residues with release of beta-D-glucose.. It functions in the pathway glycan metabolism; cellulose degradation. The chain is Beta-glucosidase from Wickerhamomyces anomalus (Yeast).